The following is a 548-amino-acid chain: Protoporphyrinogen oxidase, chloroplastic (548 aa).

The transit peptide at 1–50 (MTTTPIANHPNIFTHQSSSSPLAFLNRTSFIPFSSISKRNSVNCNGWRTR) directs the protein to the chloroplast. Residues 78–83 (GAGISG), 101–102 (EA), and 123–126 (GPNS) contribute to the FAD site. Residues 265 to 279 (KERSSTPKAPRDPRL) show a composition bias toward basic and acidic residues. The segment at 265 to 287 (KERSSTPKAPRDPRLPKPKGQTV) is disordered. Position 522 to 524 (522 to 524 (VAL)) interacts with FAD.

The protein belongs to the protoporphyrinogen/coproporphyrinogen oxidase family. Protoporphyrinogen oxidase subfamily. As to quaternary structure, homodimer. Requires FAD as cofactor.

The protein localises to the plastid. It is found in the chloroplast. The enzyme catalyses protoporphyrinogen IX + 3 O2 = protoporphyrin IX + 3 H2O2. It participates in porphyrin-containing compound metabolism; protoporphyrin-IX biosynthesis; protoporphyrin-IX from protoporphyrinogen-IX: step 1/1. It functions in the pathway porphyrin-containing compound metabolism; chlorophyll biosynthesis. In terms of biological role, catalyzes the 6-electron oxidation of protoporphyrinogen-IX to form protoporphyrin-IX. This is Protoporphyrinogen oxidase, chloroplastic (PPXI) from Nicotiana tabacum (Common tobacco).